Reading from the N-terminus, the 641-residue chain is Chaperone protein DnaK (641 aa).

Phosphothreonine; by autocatalysis is present on Thr-200. Positions 602–611 (AASSKASAAS) are enriched in low complexity. The disordered stretch occupies residues 602–641 (AASSKASAASSPPPPPGAGGQKSDVIDAEFEKVDKDKPQA). Residues 630 to 641 (EFEKVDKDKPQA) show a composition bias toward basic and acidic residues.

The protein belongs to the heat shock protein 70 family.

In terms of biological role, acts as a chaperone. This Methylacidiphilum infernorum (isolate V4) (Methylokorus infernorum (strain V4)) protein is Chaperone protein DnaK.